A 175-amino-acid chain; its full sequence is NADH-quinone oxidoreductase subunit I (175 aa).

2 consecutive 4Fe-4S ferredoxin-type domains span residues 69–98 (KRDE…IEAG) and 115–144 (KKFE…LDGP). Residues Cys78, Cys81, Cys84, Cys88, Cys124, Cys127, Cys130, and Cys134 each coordinate [4Fe-4S] cluster.

Belongs to the complex I 23 kDa subunit family. In terms of assembly, NDH-1 is composed of 14 different subunits. Subunits NuoA, H, J, K, L, M, N constitute the membrane sector of the complex. [4Fe-4S] cluster is required as a cofactor.

The protein localises to the cell inner membrane. The enzyme catalyses a quinone + NADH + 5 H(+)(in) = a quinol + NAD(+) + 4 H(+)(out). NDH-1 shuttles electrons from NADH, via FMN and iron-sulfur (Fe-S) centers, to quinones in the respiratory chain. The immediate electron acceptor for the enzyme in this species is believed to be ubiquinone. Couples the redox reaction to proton translocation (for every two electrons transferred, four hydrogen ions are translocated across the cytoplasmic membrane), and thus conserves the redox energy in a proton gradient. The polypeptide is NADH-quinone oxidoreductase subunit I (Leptospira borgpetersenii serovar Hardjo-bovis (strain JB197)).